The primary structure comprises 186 residues: Acireductone dioxygenase (186 aa).

Fe(2+) contacts are provided by histidine 89, histidine 91, glutamate 95, and histidine 134. Residues histidine 89, histidine 91, glutamate 95, and histidine 134 each contribute to the Ni(2+) site.

The protein belongs to the acireductone dioxygenase (ARD) family. The cofactor is Fe(2+). It depends on Ni(2+) as a cofactor.

It localises to the cytoplasm. The protein resides in the nucleus. The enzyme catalyses 1,2-dihydroxy-5-(methylsulfanyl)pent-1-en-3-one + O2 = 4-methylsulfanyl-2-oxobutanoate + formate + 2 H(+). It carries out the reaction 1,2-dihydroxy-5-(methylsulfanyl)pent-1-en-3-one + O2 = 3-(methylsulfanyl)propanoate + CO + formate + 2 H(+). It functions in the pathway amino-acid biosynthesis; L-methionine biosynthesis via salvage pathway; L-methionine from S-methyl-5-thio-alpha-D-ribose 1-phosphate: step 5/6. Functionally, catalyzes 2 different reactions between oxygen and the acireductone 1,2-dihydroxy-3-keto-5-methylthiopentene (DHK-MTPene) depending upon the metal bound in the active site. Fe-containing acireductone dioxygenase (Fe-ARD) produces formate and 2-keto-4-methylthiobutyrate (KMTB), the alpha-ketoacid precursor of methionine in the methionine recycle pathway. Ni-containing acireductone dioxygenase (Ni-ARD) produces methylthiopropionate, carbon monoxide and formate, and does not lie on the methionine recycle pathway. This is Acireductone dioxygenase from Drosophila melanogaster (Fruit fly).